We begin with the raw amino-acid sequence, 330 residues long: 6-methylsalicylic acid decarboxylase acuB (330 aa).

Positions 6, 8, 156, and 276 each coordinate Zn(2+).

This sequence belongs to the metallo-dependent hydrolases superfamily. ACMSD family. As to quaternary structure, monomer.

Its subcellular location is the cytoplasm. The protein localises to the cytosol. The catalysed reaction is 6-methylsalicylate + H(+) = 3-methylphenol + CO2. The protein operates within secondary metabolite biosynthesis. Functionally, 6-methylsalicylic acid decarboxylase; part of the gene cluster that mediates the biosynthesis of aculins. The pathway begins with the synthesis of 6-methylsalicylic acid by the polyketide synthase (PKS) acuA via condensation of acetate and malonate units. The 6-methylsalicylic acid decarboxylase acuB then catalyzes the decarboxylation of 6-methylsalicylic acid to yield m-cresol (also known as 3-methylphenol). These first reactions occur in the cytosol. The intermediate m-cresol is then transported into the endoplasmic reticulum where the cytochrome P450 monooxygenase acuC converts it to m-hydroxybenzyl alcohol, which is further converted to gentisyl alcohol by the cytochrome P450 monooxygenase acuD. Gentisyl alcohol is further oxidized by the oxidoreductase acuE that probably catalyzes hydroxylation of the aromatic ring. The aromatic system might then be opened by oxidation through a Baeyer-Villiger type of oxidation, which could be catalyzed by acuF, with the carboxylic acid at C-1 subsequently reduced to an aldehyde by acuG. Subsequently, a hemiacetal is formed, before the dehydrogenase acuH would reduce the double bond between C-4 and C-6. Finally, keto-enol tautomerism results in formation of aculinic acid, which exists as two diastereomers (both R/S configurations at C-1) by non-enzymatic hemiacetal formation. The carboxypeptidase acuI could be involved in the linking of aculinic acid to an aculene A moiety produced by the aculene biosynthesis cluster and which leads to the production of aculin A. AcuI may also be involved in the attachment of proline to aculinic acid to form epi-aculins A and B. This Aspergillus aculeatus (strain ATCC 16872 / CBS 172.66 / WB 5094) protein is 6-methylsalicylic acid decarboxylase acuB.